We begin with the raw amino-acid sequence, 145 residues long: Brain and acute leukemia cytoplasmic protein (145 aa).

The N-myristoyl glycine moiety is linked to residue G2. C3 carries S-palmitoyl cysteine lipidation. Residues 3–35 (CGGSRADAIEPRYYESWTRETESTWLTYTDSDA) form an interaction with CAMK2A region. The segment at 27 to 119 (WLTYTDSDAP…AKRDAKRMPA (93 aa)) is disordered. Residues 32 to 46 (DSDAPPSAAAPDSGP) are compositionally biased toward low complexity. Positions 83–108 (CETQCPNPQSLSSGPLTQKQNGLQTT) are enriched in polar residues. The span at 109–119 (EAKRDAKRMPA) shows a compositional bias: basic and acidic residues.

As to quaternary structure, interacts with CAMK2A. Post-translationally, palmitoylation and myristoylation target the protein to the lipid rafts. In terms of tissue distribution, predominantly expressed in neuroectoderm-derived tissues. Expressed in the brain and spinal cord, and at low levels, in the adrenal gland. In the bone marrow, confined to the CD34+ progenitor cells. Not found in peripheral blood mononuclear cells, nor lymph nodes. Tends to be expressed at high levels in acute myeloid leukemia and glioblastoma cells.

Its subcellular location is the cytoplasm. It is found in the synapse. The protein resides in the synaptosome. The protein localises to the membrane raft. It localises to the postsynaptic density. May play a synaptic role at the postsynaptic lipid rafts possibly through interaction with CAMK2A. This Homo sapiens (Human) protein is Brain and acute leukemia cytoplasmic protein.